We begin with the raw amino-acid sequence, 254 residues long: 5'-nucleotidase SurE (254 aa).

A divalent metal cation contacts are provided by D8, D9, S38, and N91.

Belongs to the SurE nucleotidase family. A divalent metal cation is required as a cofactor.

The protein localises to the cytoplasm. It catalyses the reaction a ribonucleoside 5'-phosphate + H2O = a ribonucleoside + phosphate. Functionally, nucleotidase that shows phosphatase activity on nucleoside 5'-monophosphates. The chain is 5'-nucleotidase SurE from Anaeromyxobacter dehalogenans (strain 2CP-C).